Here is a 257-residue protein sequence, read N- to C-terminus: Phosphatidylglycerol--prolipoprotein diacylglyceryl transferase (257 aa).

The next 4 helical transmembrane spans lie at 8-28 (IFGLEIRWYGILICMGIILAY), 48-68 (VFIVALPFSILCARLYYVIFN), 84-104 (EGGLAIHGGLIGAVISGYLMS), and 109-129 (LNFLDLIDTVAPCFILAQAIG). Arginine 130 provides a ligand contact to a 1,2-diacyl-sn-glycero-3-phospho-(1'-sn-glycerol). The next 3 helical transmembrane spans lie at 169–189 (PTFLYESIWNIVVLIILLLIT), 196–216 (GSIFYLYLIFYSLGRFFIEGL), and 225–245 (SLRMAQVISLVFIILGIILII).

Belongs to the Lgt family.

It localises to the cell membrane. The catalysed reaction is L-cysteinyl-[prolipoprotein] + a 1,2-diacyl-sn-glycero-3-phospho-(1'-sn-glycerol) = an S-1,2-diacyl-sn-glyceryl-L-cysteinyl-[prolipoprotein] + sn-glycerol 1-phosphate + H(+). It functions in the pathway protein modification; lipoprotein biosynthesis (diacylglyceryl transfer). Its function is as follows. Catalyzes the transfer of the diacylglyceryl group from phosphatidylglycerol to the sulfhydryl group of the N-terminal cysteine of a prolipoprotein, the first step in the formation of mature lipoproteins. The chain is Phosphatidylglycerol--prolipoprotein diacylglyceryl transferase from Clostridium novyi (strain NT).